Reading from the N-terminus, the 1522-residue chain is Lysophospholipase nte1 (1522 aa).

A disordered region spans residues 1–24 (MADGVTQVDSTGLHSFSPSPSLSS). Residues 1-65 (MADGVTQVDS…LPPVPTTMAG (65 aa)) are Cytoplasmic-facing. Low complexity predominate over residues 15–24 (SFSPSPSLSS). A helical transmembrane segment spans residues 66–86 (WIGWVFSFFFQVIPSVLYWII). Residues 87 to 108 (TFSTITLPTWLFTLFSMSLTFT) are Lumenal-facing. A helical membrane pass occupies residues 109-129 (MNFTTLLLIVLAVVSTISWFI). The Cytoplasmic portion of the chain corresponds to 130–1522 (RYRFLNMYSR…RTLAPRRASI (1393 aa)). Disordered regions lie at residues 308-384 (VPNS…SVHP), 523-544 (RAAT…GVSP), and 757-776 (TTTA…SRRR). The span at 369–381 (ESRKHSSRKRRKS) shows a compositional bias: basic residues. A nucleoside 3',5'-cyclic phosphate contacts are provided by residues 680 to 800 (GGTS…AVAS) and 840 to 960 (RLTS…IAQR). The 165-residue stretch at 1219-1383 (LVLGGGGARG…IDNLTVDHMK (165 aa)) folds into the PNPLA domain. Positions 1223-1228 (GGGARG) match the GXGXXG motif. The GXSXG motif lies at 1250–1254 (GTSIG). The Nucleophile role is filled by S1252. D1370 functions as the Proton acceptor in the catalytic mechanism. The DGA/G signature appears at 1370–1372 (DGG). The segment at 1501 to 1522 (LPEETEEKKKLQRTLAPRRASI) is disordered.

The protein belongs to the NTE family.

The protein resides in the endoplasmic reticulum membrane. The enzyme catalyses a 1-acyl-sn-glycero-3-phosphocholine + H2O = sn-glycerol 3-phosphocholine + a fatty acid + H(+). With respect to regulation, inhibited by organophosphorus esters. Functionally, intracellular phospholipase B that catalyzes the double deacylation of phosphatidylcholine (PC) to glycerophosphocholine (GroPCho). Plays an important role in membrane lipid homeostasis. Responsible for the rapid PC turnover in response to inositol, elevated temperatures, or when choline is present in the growth medium. This chain is Lysophospholipase nte1 (nte1), found in Aspergillus fumigatus (strain ATCC MYA-4609 / CBS 101355 / FGSC A1100 / Af293) (Neosartorya fumigata).